We begin with the raw amino-acid sequence, 366 residues long: Leucine dehydrogenase (366 aa).

The active site involves Lys82. Residue 182-188 (GVGNVAY) participates in NAD(+) binding.

Belongs to the Glu/Leu/Phe/Val dehydrogenases family.

It catalyses the reaction L-leucine + NAD(+) + H2O = 4-methyl-2-oxopentanoate + NH4(+) + NADH + H(+). Its pathway is amino-acid degradation; L-leucine degradation; 4-methyl-2-oxopentanoate from L-leucine (dehydrogenase route): step 1/1. Functionally, catalyzes the reversible deamination of L-leucine to 4-methyl-2-oxopentanoate. The chain is Leucine dehydrogenase (ldh) from Bacillus cereus.